The sequence spans 266 residues: Trypsin 5G1 (266 aa).

The first 18 residues, 1 to 18 (MTRIILILTATFFACALG), serve as a signal peptide directing secretion. Positions 19–39 (ASTGGSHPLRPWWNALRSSGR) are cleaved as a propeptide — activation peptide. The region spanning 40 to 265 (IVGGFEVPVE…VRDWVKEVSG (226 aa)) is the Peptidase S1 domain. Cysteine 66 and cysteine 82 are disulfide-bonded. Active-site charge relay system residues include histidine 81 and aspartate 125. 2 disulfide bridges follow: cysteine 190–cysteine 206 and cysteine 217–cysteine 241. Serine 221 acts as the Charge relay system in catalysis.

This sequence belongs to the peptidase S1 family. Midgut.

The protein localises to the secreted. The protein resides in the extracellular space. It catalyses the reaction Preferential cleavage: Arg-|-Xaa, Lys-|-Xaa.. Its function is as follows. Major function may be to aid in digestion of the blood meal. The sequence is that of Trypsin 5G1 from Aedes aegypti (Yellowfever mosquito).